The primary structure comprises 143 residues: Transcriptional regulator MraZ (143 aa).

2 consecutive SpoVT-AbrB domains span residues 5–47 (TFTP…PRNV) and 76–119 (ADEQ…NAES).

The protein belongs to the MraZ family. As to quaternary structure, forms oligomers.

The protein localises to the cytoplasm. Its subcellular location is the nucleoid. The sequence is that of Transcriptional regulator MraZ from Corynebacterium kroppenstedtii (strain DSM 44385 / JCM 11950 / CIP 105744 / CCUG 35717).